We begin with the raw amino-acid sequence, 187 residues long: Acireductone dioxygenase 4 (187 aa).

Alanine 2 bears the N-acetylalanine mark. Positions 89, 91, 95, and 134 each coordinate Fe(2+). Histidine 89, histidine 91, glutamate 95, and histidine 134 together coordinate Ni(2+).

Belongs to the acireductone dioxygenase (ARD) family. Fe(2+) is required as a cofactor. Requires Ni(2+) as cofactor.

It localises to the cytoplasm. Its subcellular location is the nucleus. It carries out the reaction 1,2-dihydroxy-5-(methylsulfanyl)pent-1-en-3-one + O2 = 4-methylsulfanyl-2-oxobutanoate + formate + 2 H(+). It catalyses the reaction 1,2-dihydroxy-5-(methylsulfanyl)pent-1-en-3-one + O2 = 3-(methylsulfanyl)propanoate + CO + formate + 2 H(+). Its pathway is amino-acid biosynthesis; L-methionine biosynthesis via salvage pathway; L-methionine from S-methyl-5-thio-alpha-D-ribose 1-phosphate: step 5/6. In terms of biological role, catalyzes 2 different reactions between oxygen and the acireductone 1,2-dihydroxy-3-keto-5-methylthiopentene (DHK-MTPene) depending upon the metal bound in the active site. Fe-containing acireductone dioxygenase (Fe-ARD) produces formate and 2-keto-4-methylthiobutyrate (KMTB), the alpha-ketoacid precursor of methionine in the methionine recycle pathway. Ni-containing acireductone dioxygenase (Ni-ARD) produces methylthiopropionate, carbon monoxide and formate, and does not lie on the methionine recycle pathway. The protein is Acireductone dioxygenase 4 (ARD4) of Arabidopsis thaliana (Mouse-ear cress).